The chain runs to 77 residues: Conotoxin Mr8.2 (77 aa).

The signal sequence occupies residues 1-16; that stretch reads MLRLITAAVLVSACLA. The propeptide occupies 17–32; that stretch reads YPQKKRTPPQTRPTSR.

This sequence belongs to the conotoxin B2 family. Contains 5 disulfide bonds. In terms of tissue distribution, expressed by the venom duct.

It localises to the secreted. This chain is Conotoxin Mr8.2, found in Conus marmoreus (Marble cone).